The following is a 517-amino-acid chain: Bifunctional purine biosynthesis protein PurH (517 aa).

The region spanning 1 to 145 (MSPLALVSVS…KNHKDVSVLV (145 aa)) is the MGS-like domain.

It belongs to the PurH family.

The enzyme catalyses (6R)-10-formyltetrahydrofolate + 5-amino-1-(5-phospho-beta-D-ribosyl)imidazole-4-carboxamide = 5-formamido-1-(5-phospho-D-ribosyl)imidazole-4-carboxamide + (6S)-5,6,7,8-tetrahydrofolate. It carries out the reaction IMP + H2O = 5-formamido-1-(5-phospho-D-ribosyl)imidazole-4-carboxamide. It functions in the pathway purine metabolism; IMP biosynthesis via de novo pathway; 5-formamido-1-(5-phospho-D-ribosyl)imidazole-4-carboxamide from 5-amino-1-(5-phospho-D-ribosyl)imidazole-4-carboxamide (10-formyl THF route): step 1/1. Its pathway is purine metabolism; IMP biosynthesis via de novo pathway; IMP from 5-formamido-1-(5-phospho-D-ribosyl)imidazole-4-carboxamide: step 1/1. This is Bifunctional purine biosynthesis protein PurH from Prochlorococcus marinus (strain MIT 9312).